The primary structure comprises 618 residues: DNA mismatch repair protein MutL (618 aa).

Low complexity predominate over residues 366 to 378 (AEPTAAREPATPR). The tract at residues 366-403 (AEPTAAREPATPRYSDGASGGNGGRQSAGGWPHAQPGY) is disordered. Positions 383–392 (ASGGNGGRQS) are enriched in gly residues.

It belongs to the DNA mismatch repair MutL/HexB family.

Its function is as follows. This protein is involved in the repair of mismatches in DNA. It is required for dam-dependent methyl-directed DNA mismatch repair. May act as a 'molecular matchmaker', a protein that promotes the formation of a stable complex between two or more DNA-binding proteins in an ATP-dependent manner without itself being part of a final effector complex. The sequence is that of DNA mismatch repair protein MutL from Salmonella typhi.